The primary structure comprises 383 residues: Ceramide synthase 3 (383 aa).

The chain crosses the membrane as a helical span at residues Val-32–Val-52. The segment at Asn-66 to Cys-127 is homeobox-like. The 202-residue stretch at Gln-130–Phe-331 folds into the TLC domain. The next 5 membrane-spanning stretches (helical) occupy residues Phe-139 to Ala-159, Leu-174 to Phe-194, Phe-205 to Ala-225, Leu-263 to Ile-283, and Ile-302 to Ile-322. Residues Leu-323 to Arg-383 are Cytoplasmic-facing. At Ser-340 the chain carries Phosphoserine. Positions Ser-340–Arg-383 are disordered. Acidic residues predominate over residues Asn-342 to Ala-354. Basic and acidic residues predominate over residues Glu-355–Tyr-364.

As to expression, predominantly expressed in testis. In skin, present in the upper stratum spinosum and stratum granulosum (at protein level).

The protein resides in the endoplasmic reticulum membrane. It catalyses the reaction a very long-chain fatty acyl-CoA + a sphingoid base = an N-(very-long-chain fatty acyl)-sphingoid base + CoA + H(+). The enzyme catalyses docosanoyl-CoA + sphinganine = N-docosanoylsphinganine + CoA + H(+). The catalysed reaction is tetracosanoyl-CoA + sphinganine = N-tetracosanoylsphinganine + CoA + H(+). It carries out the reaction hexacosanoyl-CoA + sphinganine = N-hexacosanoylsphinganine + CoA + H(+). It catalyses the reaction 2-hydroxydocosanoyl-CoA + sphinganine = N-(2-hydroxydocosanoyl)-sphinganine + CoA + H(+). The enzyme catalyses 2-hydroxytetracosanoyl-CoA + sphinganine = N-(2-hydroxytetracosanoyl)-sphinganine + CoA + H(+). The catalysed reaction is an ultra-long-chain fatty acyl-CoA + a sphingoid base = an N-(ultra-long-chain-acyl)-sphingoid base + CoA + H(+). It carries out the reaction octacosanoyl-CoA + sphinganine = N-(octacosanoyl)-sphinganine + CoA + H(+). It catalyses the reaction a fatty acyl-CoA + sphing-4-enine = an N-acylsphing-4-enine + CoA + H(+). The enzyme catalyses sphinganine + octadecanoyl-CoA = N-(octadecanoyl)-sphinganine + CoA + H(+). The catalysed reaction is 2-hydroxyoctadecanoyl-CoA + sphinganine = N-(2-hydroxyoctadecanoyl)-sphinganine + CoA + H(+). Its pathway is lipid metabolism; sphingolipid metabolism. Functionally, ceramide synthase that catalyzes the transfer of the acyl chain from acyl-CoA to a sphingoid base, with high selectivity toward very- and ultra-long-chain fatty acyl-CoA (chain length greater than C22). N-acylates sphinganine and sphingosine bases to form dihydroceramides and ceramides in de novo synthesis and salvage pathways, respectively. It is crucial for the synthesis of ultra-long-chain ceramides in the epidermis, to maintain epidermal lipid homeostasis and terminal differentiation. The chain is Ceramide synthase 3 from Mus musculus (Mouse).